A 174-amino-acid chain; its full sequence is RNA pyrophosphohydrolase (174 aa).

Positions 6–149 (GFRANVGIII…KRDVYRKVMK (144 aa)) constitute a Nudix hydrolase domain. Positions 38–59 (GGVDEGESAEQAMYRELYEEVG) match the Nudix box motif.

Belongs to the Nudix hydrolase family. RppH subfamily. A divalent metal cation serves as cofactor.

In terms of biological role, accelerates the degradation of transcripts by removing pyrophosphate from the 5'-end of triphosphorylated RNA, leading to a more labile monophosphorylated state that can stimulate subsequent ribonuclease cleavage. The protein is RNA pyrophosphohydrolase of Shewanella loihica (strain ATCC BAA-1088 / PV-4).